A 662-amino-acid chain; its full sequence is Protein Aster-C (662 aa).

The disordered stretch occupies residues 1–34 (MEGAPTVRQVMNEGDSSLATELQEDVEENPSPTV). The 68-residue stretch at 69–136 (EEYRRQFTHL…KNITFMTKEK (68 aa)) folds into the GRAM domain. Disordered regions lie at residues 212–237 (SIEDVRPRSPGRSSLDDSGERDEKLS) and 250–284 (VSETESFDGNSSKGGLGKEESQNEKQTKKSLLPTL). The span at 265 to 276 (LGKEESQNEKQT) shows a compositional bias: basic and acidic residues. Positions 326-497 (HGRLFINRIF…DLLIEESILN (172 aa)) constitute a VASt domain. The helical transmembrane segment at 557–577 (LIVVMSIFVLLLVLLNVTLFL) threads the bilayer.

The protein resides in the endoplasmic reticulum membrane. The protein localises to the cell membrane. Its function is as follows. Cholesterol transporter that mediates non-vesicular transport of cholesterol from the plasma membrane (PM) to the endoplasmic reticulum (ER). Contains unique domains for binding cholesterol and the PM, thereby serving as a molecular bridge for the transfer of cholesterol from the PM to the ER. Plays a crucial role in cholesterol homeostasis and has the unique ability to localize to the PM based on the level of membrane cholesterol. In lipid-poor conditions localizes to the ER membrane and in response to excess cholesterol in the PM is recruited to the endoplasmic reticulum-plasma membrane contact sites (EPCS) which is mediated by the GRAM domain. At the EPCS, the sterol-binding VASt/ASTER domain binds to the cholesterol in the PM and facilitates its transfer from the PM to ER. This chain is Protein Aster-C (GRAMD1C), found in Pongo abelii (Sumatran orangutan).